Reading from the N-terminus, the 490-residue chain is Bifunctional IPC transferase and DIPP synthase (490 aa).

The interval 72-290 (LMKAVILAAG…RANRALVSAA (219 aa)) is mobA-like NTP transferase. CTP contacts are provided by residues 78-80 (LAA), Lys-91, Asp-144, and Glu-180. Glu-180 is a binding site for Mg(2+). The interval 291 to 490 (VKGSGDGFIS…VTLLAVLVSK (200 aa)) is CDP-alcohol phosphatidyltransferases. Transmembrane regions (helical) follow at residues 329 to 349 (FLVG…AGLL), 389 to 409 (FLAI…FAIF), 447 to 467 (IFLI…IFWM), and 468 to 488 (FLFV…AVLV).

It in the N-terminal section; belongs to the MobA family. This sequence in the C-terminal section; belongs to the CDP-alcohol phosphatidyltransferase class-I family. Forms a mixture of monomers and dimers in solution, with prevalence of the monomeric form. Mg(2+) is required as a cofactor.

The protein resides in the membrane. It catalyses the reaction 1D-myo-inositol 3-phosphate + CTP + H(+) = CDP-1L-myo-inositol + diphosphate. It carries out the reaction CDP-1L-myo-inositol + 1D-myo-inositol 3-phosphate = bis(1L-myo-inositol) 3,1'-phosphate 1-phosphate + CMP + H(+). Functionally, involved in biosynthesis of di-myo-inositol phosphate (DIP), a widespread organic solute in microorganisms adapted to hot environments. Catalyzes the condensation of CTP and L-myo-inositol-1-phosphate into CDP-L-myo-inositol, as well as the biosynthesis of di-myo-inositol-1,3'-phosphate-1'-phosphate (DIPP) from CDP-L-myo-inositol and L-myo-inositol-1-phosphate. The cytidylyltransferase is absolutely specific for CTP and L-myo-inositol-1-P. The DIPP synthase uses only L-myoinositol-1-phosphate as an alcohol acceptor, but CDP-glycerol, as well as CDP-L-myo-inositol and CDP-D-myoinositol, are recognized as alcohol donors. In Archaeoglobus fulgidus (strain ATCC 49558 / DSM 4304 / JCM 9628 / NBRC 100126 / VC-16), this protein is Bifunctional IPC transferase and DIPP synthase.